Here is a 223-residue protein sequence, read N- to C-terminus: Endonuclease III (223 aa).

The HhH domain maps to 118-137 (RDFLTAIEGIGDKTADVVLL). [4Fe-4S] cluster contacts are provided by Cys198, Cys205, Cys208, and Cys214.

The protein belongs to the Nth/MutY family. [4Fe-4S] cluster is required as a cofactor.

The enzyme catalyses 2'-deoxyribonucleotide-(2'-deoxyribose 5'-phosphate)-2'-deoxyribonucleotide-DNA = a 3'-end 2'-deoxyribonucleotide-(2,3-dehydro-2,3-deoxyribose 5'-phosphate)-DNA + a 5'-end 5'-phospho-2'-deoxyribonucleoside-DNA + H(+). In terms of biological role, probably part of a 4-gene DNA damage response locus in which the upstream ups system, in combination with this downstream locus, functions in homologous recombination to rescue Sulfolobales from DNA-damaging threats. DNA repair enzyme that has both DNA N-glycosylase activity and AP-lyase activity. The DNA N-glycosylase activity releases various damaged pyrimidines from DNA by cleaving the N-glycosidic bond, leaving an AP (apurinic/apyrimidinic) site. The AP-lyase activity cleaves the phosphodiester bond 3' to the AP site by a beta-elimination, leaving a 3'-terminal unsaturated sugar and a product with a terminal 5'-phosphate. Nicks UV-treated plasmid DNA in a dose-dependent manner, has no activity on untreated DNA. The polypeptide is Endonuclease III (Sulfolobus acidocaldarius (strain ATCC 33909 / DSM 639 / JCM 8929 / NBRC 15157 / NCIMB 11770)).